Here is a 151-residue protein sequence, read N- to C-terminus: U1 small nuclear ribonucleoprotein C (151 aa).

The segment at 4 to 36 (FYCEYCSIYLTHSSPAGRKQHSQGRKHISAKVE) adopts a Matrin-type zinc-finger fold.

The protein belongs to the U1 small nuclear ribonucleoprotein C family. As to quaternary structure, U1 snRNP is composed of the 7 core Sm proteins B/B', D1, D2, D3, E, F and G that assemble in a heptameric protein ring on the Sm site of the small nuclear RNA to form the core snRNP, and at least 3 U1 snRNP-specific proteins U1-70K, U1-A and U1-C. U1-C interacts with U1 snRNA and the 5' splice-site region of the pre-mRNA.

It localises to the nucleus. Its function is as follows. Component of the spliceosomal U1 snRNP, which is essential for recognition of the pre-mRNA 5' splice-site and the subsequent assembly of the spliceosome. U1-C is directly involved in initial 5' splice-site recognition for both constitutive and regulated alternative splicing. The interaction with the 5' splice-site seems to precede base-pairing between the pre-mRNA and the U1 snRNA. Stimulates commitment or early (E) complex formation by stabilizing the base pairing of the 5' end of the U1 snRNA and the 5' splice-site region. The protein is U1 small nuclear ribonucleoprotein C of Theileria annulata.